Consider the following 160-residue polypeptide: Protein-export protein SecB (160 aa).

The protein belongs to the SecB family. Homotetramer, a dimer of dimers. One homotetramer interacts with 1 SecA dimer.

It is found in the cytoplasm. Functionally, one of the proteins required for the normal export of preproteins out of the cell cytoplasm. It is a molecular chaperone that binds to a subset of precursor proteins, maintaining them in a translocation-competent state. It also specifically binds to its receptor SecA. In Beijerinckia indica subsp. indica (strain ATCC 9039 / DSM 1715 / NCIMB 8712), this protein is Protein-export protein SecB.